Here is a 2152-residue protein sequence, read N- to C-terminus: Oxygen-regulated protein 1 (2152 aa).

A compositionally biased stretch (polar residues) spans 1–19 (MSDTPSTGFSIIHPTSSED). The interval 1–25 (MSDTPSTGFSIIHPTSSEDQVPPPR) is disordered. Doublecortin domains lie at 36-118 (KRIS…VDLD) and 154-233 (RSLV…GNYD). Disordered stretches follow at residues 353–375 (VSKT…RTES), 1435–1455 (DMEE…MTSS), and 1587–1616 (DWSD…ELAQ).

As to quaternary structure, interacts (via the doublecortin domains) with microtubules. Interacts with RP1L1. Interacts with MAK.

The protein resides in the cytoplasm. It is found in the cytoskeleton. The protein localises to the cilium axoneme. It localises to the cell projection. Its subcellular location is the cilium. The protein resides in the photoreceptor outer segment. Functionally, microtubule-associated protein regulating the stability and length of the microtubule-based axoneme of photoreceptors. Required for the differentiation of photoreceptor cells, it plays a role in the organization of the outer segment of rod and cone photoreceptors ensuring the correct orientation and higher-order stacking of outer segment disks along the photoreceptor axoneme. The polypeptide is Oxygen-regulated protein 1 (RP1) (Papio hamadryas (Hamadryas baboon)).